Consider the following 175-residue polypeptide: ATP synthase subunit b (175 aa).

A helical transmembrane segment spans residues L20–W40.

The protein belongs to the ATPase B chain family. F-type ATPases have 2 components, F(1) - the catalytic core - and F(0) - the membrane proton channel. F(1) has five subunits: alpha(3), beta(3), gamma(1), delta(1), epsilon(1). F(0) has four main subunits: a(1), b(2) and c(10-14). The alpha and beta chains form an alternating ring which encloses part of the gamma chain. F(1) is attached to F(0) by a central stalk formed by the gamma and epsilon chains, while a peripheral stalk is formed by the delta and b chains.

The protein resides in the cell inner membrane. Functionally, f(1)F(0) ATP synthase produces ATP from ADP in the presence of a proton or sodium gradient. F-type ATPases consist of two structural domains, F(1) containing the extramembraneous catalytic core and F(0) containing the membrane proton channel, linked together by a central stalk and a peripheral stalk. During catalysis, ATP synthesis in the catalytic domain of F(1) is coupled via a rotary mechanism of the central stalk subunits to proton translocation. Its function is as follows. Component of the F(0) channel, it forms part of the peripheral stalk, linking F(1) to F(0). The protein is ATP synthase subunit b of Chlorobium limicola (strain DSM 245 / NBRC 103803 / 6330).